The primary structure comprises 207 residues: DNA-directed RNA polymerase subunit alpha (207 aa).

It belongs to the RNA polymerase alpha chain family. As to quaternary structure, in plastids the minimal PEP RNA polymerase catalytic core is composed of four subunits: alpha, beta, beta', and beta''. When a (nuclear-encoded) sigma factor is associated with the core the holoenzyme is formed, which can initiate transcription.

It localises to the plastid. The protein localises to the chloroplast. It catalyses the reaction RNA(n) + a ribonucleoside 5'-triphosphate = RNA(n+1) + diphosphate. Its function is as follows. DNA-dependent RNA polymerase catalyzes the transcription of DNA into RNA using the four ribonucleoside triphosphates as substrates. This chain is DNA-directed RNA polymerase subunit alpha (rpoA), found in Euglena myxocylindracea.